Consider the following 82-residue polypeptide: Small ribosomal subunit protein bS16 (82 aa).

Belongs to the bacterial ribosomal protein bS16 family.

The polypeptide is Small ribosomal subunit protein bS16 (Crocosphaera subtropica (strain ATCC 51142 / BH68) (Cyanothece sp. (strain ATCC 51142))).